The chain runs to 531 residues: Dimethylnonatriene synthase (531 aa).

The helical transmembrane segment at 6–26 (TMSVAMALAAAIFVVLCSVVA) threads the bilayer. Cys-464 is a binding site for heme.

It belongs to the cytochrome P450 family. Heme serves as cofactor.

The protein localises to the membrane. The catalysed reaction is (6E,10E)-geranyllinalool + reduced [NADPH--hemoprotein reductase] + O2 = (3E,7E)-4,8,12-trimethyltrideca 1,3,7,11-tetraene + but-3-en-2-one + oxidized [NADPH--hemoprotein reductase] + 2 H2O + H(+). It carries out the reaction (3S,6E)-nerolidol + reduced [NADPH--hemoprotein reductase] + O2 = (3E)-4,8-dimethylnona-1,3,7-triene + but-3-en-2-one + oxidized [NADPH--hemoprotein reductase] + 2 H2O + H(+). Its pathway is secondary metabolite biosynthesis; terpenoid biosynthesis. Its function is as follows. Involved in the biosynthesis of homoterpenes, attractants of herbivores parasitoids and predators (e.g. predatory mites and parasitoid wasps). Component of the volatile terpenes biosynthesis pathways. Converts mainly nerolidol to dimethylnonatriene (DMNT) and, to a lower extent, geranyllinalool to trimethyltridecatetraene (TMTT). This chain is Dimethylnonatriene synthase, found in Zea mays (Maize).